A 201-amino-acid chain; its full sequence is ATP-dependent Clp protease proteolytic subunit (201 aa).

Residue Ser-98 is the Nucleophile of the active site. The active site involves His-123.

The protein belongs to the peptidase S14 family. In terms of assembly, fourteen ClpP subunits assemble into 2 heptameric rings which stack back to back to give a disk-like structure with a central cavity, resembling the structure of eukaryotic proteasomes.

The protein resides in the cytoplasm. The enzyme catalyses Hydrolysis of proteins to small peptides in the presence of ATP and magnesium. alpha-casein is the usual test substrate. In the absence of ATP, only oligopeptides shorter than five residues are hydrolyzed (such as succinyl-Leu-Tyr-|-NHMec, and Leu-Tyr-Leu-|-Tyr-Trp, in which cleavage of the -Tyr-|-Leu- and -Tyr-|-Trp bonds also occurs).. Cleaves peptides in various proteins in a process that requires ATP hydrolysis. Has a chymotrypsin-like activity. Plays a major role in the degradation of misfolded proteins. The chain is ATP-dependent Clp protease proteolytic subunit from Rickettsia conorii (strain ATCC VR-613 / Malish 7).